The sequence spans 506 residues: Beta-glucosidase 13 (506 aa).

Residues 1–25 form the signal peptide; it reads MAAAGEVVMLGGILLPLLLVVAVSG. Gln49 contacts a beta-D-glucoside. N-linked (GlcNAc...) asparagine glycosylation occurs at Asn118. A beta-D-glucoside contacts are provided by residues His153 and 198–199; that span reads NE. Glu199 acts as the Proton donor in catalysis. A disulfide bridge links Cys219 with Cys226. Residue Asn225 is glycosylated (N-linked (GlcNAc...) asparagine). A beta-D-glucoside is bound at residue Tyr342. Residues Asn357 and Asn367 are each glycosylated (N-linked (GlcNAc...) asparagine). A beta-D-glucoside is bound at residue Glu413. Glu413 (nucleophile) is an active-site residue. An N-linked (GlcNAc...) asparagine glycan is attached at Asn421. Residues Trp462, 469–470, and Phe478 contribute to the a beta-D-glucoside site; that span reads EW.

It belongs to the glycosyl hydrolase 1 family.

It catalyses the reaction Hydrolysis of terminal, non-reducing beta-D-glucosyl residues with release of beta-D-glucose.. This chain is Beta-glucosidase 13 (BGLU13), found in Oryza sativa subsp. japonica (Rice).